A 230-amino-acid polypeptide reads, in one-letter code: Isoprenyl transferase (230 aa).

The active site involves Asp14. Mg(2+) is bound at residue Asp14. Residues 15 to 18 (GNGR), Trp19, Arg27, His31, and 59 to 61 (STE) contribute to the substrate site. Residue Asn62 is the Proton acceptor of the active site. Substrate-binding positions include Trp63, Arg65, Arg175, and 181-183 (RIS). A Mg(2+)-binding site is contributed by Glu194.

It belongs to the UPP synthase family. As to quaternary structure, homodimer. Requires Mg(2+) as cofactor.

Functionally, catalyzes the condensation of isopentenyl diphosphate (IPP) with allylic pyrophosphates generating different type of terpenoids. The polypeptide is Isoprenyl transferase (Fusobacterium nucleatum subsp. nucleatum (strain ATCC 25586 / DSM 15643 / BCRC 10681 / CIP 101130 / JCM 8532 / KCTC 2640 / LMG 13131 / VPI 4355)).